Consider the following 214-residue polypeptide: Adenylate kinase (214 aa).

An ATP-binding site is contributed by 10-15; that stretch reads GAGKGT. The interval 30–59 is NMP; sequence STGDMFRAAIKAGTELGKQAKALMDEGKLV. AMP contacts are provided by residues Thr31, Arg36, 57–59, 85–88, and Gln92; these read KLV and GFPR. The tract at residues 122–159 is LID; it reads GRRVHQTSGRSYHIVYNPPKVEGKDDVTGEDLIIRADD. ATP is bound by residues Arg123 and 132–133; that span reads SY. Residues Arg156 and Arg167 each coordinate AMP. Residue Gln200 coordinates ATP.

The protein belongs to the adenylate kinase family. Monomer.

It is found in the cytoplasm. It catalyses the reaction AMP + ATP = 2 ADP. It functions in the pathway purine metabolism; AMP biosynthesis via salvage pathway; AMP from ADP: step 1/1. Functionally, catalyzes the reversible transfer of the terminal phosphate group between ATP and AMP. Plays an important role in cellular energy homeostasis and in adenine nucleotide metabolism. This Haemophilus influenzae (strain PittEE) protein is Adenylate kinase.